Here is a 312-residue protein sequence, read N- to C-terminus: Glyoxylate/hydroxypyruvate reductase A (312 aa).

The active site involves arginine 227. The active-site Proton donor is the histidine 275.

It belongs to the D-isomer specific 2-hydroxyacid dehydrogenase family. GhrA subfamily.

It localises to the cytoplasm. It catalyses the reaction glycolate + NADP(+) = glyoxylate + NADPH + H(+). It carries out the reaction (R)-glycerate + NAD(+) = 3-hydroxypyruvate + NADH + H(+). The enzyme catalyses (R)-glycerate + NADP(+) = 3-hydroxypyruvate + NADPH + H(+). In terms of biological role, catalyzes the NADPH-dependent reduction of glyoxylate and hydroxypyruvate into glycolate and glycerate, respectively. This chain is Glyoxylate/hydroxypyruvate reductase A, found in Enterobacter sp. (strain 638).